The following is a 563-amino-acid chain: MFAQPFDHSFNNDDLFSQYVNIDGSSTDGNKDVSFPSDFDQFFSLDSLSSNCGEQSPIISTSKQQTHPSPQWAKDFWSLPPDAPSSLGQAPLAFQDTVHPSAVSDLNVNLEASSTTCPAETRSSPTTPPGTPRRKPKSALVTPKSIQRHREPNGRRGLQHKQSFSPSLTRPSQFQKGRMAYQEAWAHRLQNLNFLRSADDRFPLSPPPSDILPQQENIAADNSAVHIHHSGDSTEMHHHFDTSIFTPSPAISMPSPCTGVLSRQQARYLNHSNNSTVTSSPPSADDIFPSPHSSDPQSMSSWHSDALGTPGLFTPDLQSHDAQAWWPPMNARVPQRQPSYQQVVASPPPQQPIQNTTHQHDLANSQHDILQGGLMIQMDPSAYDMTATANSSFSSTTMAPTASSCQENHTYSHVPTAHAKYVDASSFATPQLHPQSRSPSLSPRADRSPKNGLAMHHSITMKAQRRQPGRKISSNSMNVPKPVKGLNGSGSPKGAKSVTVSFVNFTLNDSQKILTGVAPSGSSKTKARREQEARDRRRRISEAALNAVRKAGGDVEALEAVMF.

Composition is skewed to polar residues over residues 54-69 (EQSPIISTSKQQTHPS) and 160-175 (HKQSFSPSLTRPSQFQ). Disordered regions lie at residues 54-81 (EQSPIISTSKQQTHPSPQWAKDFWSLPP), 112-176 (ASST…QFQK), 272-318 (SNNS…PDLQ), 334-356 (PQRQPSYQQVVASPPPQQPIQNT), 430-494 (PQLH…SPKG), and 516-538 (GVAPSGSSKTKARREQEARDRRR). Residues 272-305 (SNNSTVTSSPPSADDIFPSPHSSDPQSMSSWHSD) show a composition bias toward low complexity. Polar residues predominate over residues 430–441 (PQLHPQSRSPSL).

The protein belongs to the wetA family.

BrlA, abaA and wetA are pivotal regulators of conidiophore development and conidium maturation. They act individually and together to regulate their own expression and that of numerous other sporulation-specific genes. This chain is Developmental regulatory protein wetA, found in Aspergillus oryzae (strain ATCC 42149 / RIB 40) (Yellow koji mold).